A 324-amino-acid polypeptide reads, in one-letter code: MPKSERKILLDFEKPLAELENRINQIRELAKDCSSVDVSEQIYQLEAKATQLRQEIFSSLSPVQKLQLARHPRRPTSLDYIQAISDEWIELHGDRGGSDDPAIVGGLARVNGRPVVIIGHQKGRDTKDNVARNFGMASAGGYRKSIRFMEHGNRFGMPILTFIDTPGAWPGIEAERLGQGEAIAYNLREMFHLDVPIICTVIGEGGSGGALGVGVGDRLLMLEHSIYTVASPEACAAILWKDASKASQAAEALKITSWDLKKIGIIDDVVPEPSGGAHANPLQAAENLKTAIVKSLDDLNHLSSPQRRKKRYQKFRSMGVFLET.

The CoA carboxyltransferase C-terminal domain occupies 44-298 (QLEAKATQLR…KTAIVKSLDD (255 aa)).

Belongs to the AccA family. Acetyl-CoA carboxylase is a heterohexamer composed of biotin carboxyl carrier protein (AccB), biotin carboxylase (AccC) and two subunits each of ACCase subunit alpha (AccA) and ACCase subunit beta (AccD).

It localises to the cytoplasm. The enzyme catalyses N(6)-carboxybiotinyl-L-lysyl-[protein] + acetyl-CoA = N(6)-biotinyl-L-lysyl-[protein] + malonyl-CoA. It functions in the pathway lipid metabolism; malonyl-CoA biosynthesis; malonyl-CoA from acetyl-CoA: step 1/1. Its function is as follows. Component of the acetyl coenzyme A carboxylase (ACC) complex. First, biotin carboxylase catalyzes the carboxylation of biotin on its carrier protein (BCCP) and then the CO(2) group is transferred by the carboxyltransferase to acetyl-CoA to form malonyl-CoA. The polypeptide is Acetyl-coenzyme A carboxylase carboxyl transferase subunit alpha (Trichodesmium erythraeum (strain IMS101)).